Consider the following 889-residue polypeptide: 97 kDa heat shock protein (889 aa).

2 disordered regions span residues 504-622 (EDAM…ATTD) and 812-889 (FVCD…MELD). Residues 549-585 (SADKEEQADNGSKETSKDSKDQTSESSKSDKESKDQN) are compositionally biased toward basic and acidic residues. Positions 586–597 (SEGSKSDNSSTE) are enriched in polar residues. Residues 869–889 (ASKEGETKPDETKPDVEMELD) are compositionally biased toward basic and acidic residues.

This sequence belongs to the heat shock protein 70 family.

In terms of biological role, cell surface recognition protein that binds acrosome-reacted sperm and thereby mediates binding and subsequent fusion of the sperm and egg. The sequence is that of 97 kDa heat shock protein from Strongylocentrotus purpuratus (Purple sea urchin).